Here is a 194-residue protein sequence, read N- to C-terminus: Peptidyl-tRNA hydrolase (194 aa).

Residue Tyr17 coordinates tRNA. The active-site Proton acceptor is the His22. TRNA-binding residues include Phe68, Asn70, and Asn116.

This sequence belongs to the PTH family. Monomer.

The protein resides in the cytoplasm. It catalyses the reaction an N-acyl-L-alpha-aminoacyl-tRNA + H2O = an N-acyl-L-amino acid + a tRNA + H(+). Hydrolyzes ribosome-free peptidyl-tRNAs (with 1 or more amino acids incorporated), which drop off the ribosome during protein synthesis, or as a result of ribosome stalling. Functionally, catalyzes the release of premature peptidyl moieties from peptidyl-tRNA molecules trapped in stalled 50S ribosomal subunits, and thus maintains levels of free tRNAs and 50S ribosomes. This is Peptidyl-tRNA hydrolase from Pasteurella multocida (strain Pm70).